The primary structure comprises 964 residues: Protein translocase subunit SecA (964 aa).

ATP contacts are provided by residues Q86, 104-108, and D494; that span reads GEGKT. Residues 846–964 are disordered; the sequence is ETAESADTIA…YKMCHGQNEA (119 aa). Acidic residues predominate over residues 871–882; the sequence is AEGEVEEEDEDT. Positions 887 to 900 are enriched in low complexity; sequence AIAESAAASEAGES. 4 residues coordinate Zn(2+): C947, C949, C958, and H959.

The protein belongs to the SecA family. Monomer and homodimer. Part of the essential Sec protein translocation apparatus which comprises SecA, SecYEG and auxiliary proteins SecDF. Other proteins may also be involved. It depends on Zn(2+) as a cofactor.

The protein resides in the cell membrane. The protein localises to the cytoplasm. The enzyme catalyses ATP + H2O + cellular proteinSide 1 = ADP + phosphate + cellular proteinSide 2.. In terms of biological role, part of the Sec protein translocase complex. Interacts with the SecYEG preprotein conducting channel. Has a central role in coupling the hydrolysis of ATP to the transfer of proteins into and across the cell membrane, serving as an ATP-driven molecular motor driving the stepwise translocation of polypeptide chains across the membrane. The chain is Protein translocase subunit SecA from Bifidobacterium longum subsp. infantis (strain ATCC 15697 / DSM 20088 / JCM 1222 / NCTC 11817 / S12).